The sequence spans 424 residues: Keratin, type I cytoskeletal 20 (424 aa).

Residues 1-69 form a head region; the sequence is MDFSRRSFHR…TGGGDLFVGN (69 aa). Ser-13 carries the post-translational modification Phosphoserine; by MAPKAPK2, MAPKAPK3 and PKC. The tract at residues 70-105 is coil 1A; the sequence is EKMAMQNLNDRLASYLEKVRTLEQSNSKLEVQIKQW. An IF rod domain is found at 70 to 381; it reads EKMAMQNLND…RLLEGEDVKT (312 aa). The segment at 106-123 is linker 1; that stretch reads YETNAPRAGRDYSAYYRQ. Residues 124–215 form a coil 1B region; the sequence is IEELRSQIKD…KEHQEEVDGL (92 aa). The linker 12 stretch occupies residues 216–238; sequence HKHLGNTVNVEVDAAPGLNLGVI. The interval 239-377 is coil 2; it reads MNEMRQKYEV…ATYRRLLEGE (139 aa). Positions 378-424 are tail; sequence DVKTTEYQLSTLEERDIKKTRKIKTVVQEVVDGKVVSSEVKEVEENI.

It belongs to the intermediate filament family. Heterotetramer of two type I and two type II keratins. Associates with KRT8. Hyperphosphorylation at Ser-13 occurs during the early stages of apoptosis but becomes less prominent during the later stages. Phosphorylation at Ser-13 also increases in response to stress brought on by cell injury. In terms of processing, proteolytically cleaved by caspases during apoptosis. Cleavage occurs at Asp-228. In terms of tissue distribution, expressed predominantly in the intestinal epithelium. Expressed in luminal cells of colonic mucosa. Also expressed in the Merkel cells of keratinized oral mucosa; specifically at the tips of some rete ridges of the gingival mucosa, in the basal layer of the palatal mucosa and in the taste buds of lingual mucosa.

Its subcellular location is the cytoplasm. Plays a significant role in maintaining keratin filament organization in intestinal epithelia. When phosphorylated, plays a role in the secretion of mucin in the small intestine. This Homo sapiens (Human) protein is Keratin, type I cytoskeletal 20 (KRT20).